We begin with the raw amino-acid sequence, 928 residues long: RhoGEF domain-containing protein gxcH (928 aa).

Residues 30–48 are compositionally biased toward low complexity; the sequence is SKSFDNNNNNNSNTNNIKN. 3 disordered regions span residues 30–76, 90–201, and 318–410; these read SKSF…PPVP, ITNY…PPLG, and DNGV…NKDT. A compositionally biased stretch (polar residues) spans 93 to 103; sequence YIPTTPPSINI. Residues 112–123 are compositionally biased toward acidic residues; that stretch reads DNYDDNYDDNYS. Composition is skewed to polar residues over residues 129–141, 175–187, and 334–367; these read TSTT…SPEF, ETFN…EGLQ, and KSGT…NLRG. Positions 377 to 407 are enriched in low complexity; that stretch reads NQTTNKNNSNNNNNNTTTNNNNNNNNNNNNN. The 188-residue stretch at 484 to 671 folds into the DH domain; sequence IFNKVVKEII…GKIVSDINGK (188 aa). The tract at residues 699–807 is PH-like; sequence FIGEGKVKKV…NKIEDQIVSE (109 aa). Residues 835–928 form a disordered region; the sequence is SDSQSDFVDH…NTEPENFSFY (94 aa). Over residues 848–857 the composition is skewed to low complexity; sequence QEQQEQQQQQ.

In terms of biological role, GTPase-activating protein. The chain is RhoGEF domain-containing protein gxcH (gxcH) from Dictyostelium discoideum (Social amoeba).